The sequence spans 273 residues: Large ribosomal subunit protein uL2 (273 aa).

Disordered regions lie at residues 28 to 53 (KPFA…TTRH) and 221 to 273 (RGTA…RRSK). Residues 39–48 (KSGGRNNNGR) show a composition bias toward low complexity.

This sequence belongs to the universal ribosomal protein uL2 family. Part of the 50S ribosomal subunit. Forms a bridge to the 30S subunit in the 70S ribosome.

Functionally, one of the primary rRNA binding proteins. Required for association of the 30S and 50S subunits to form the 70S ribosome, for tRNA binding and peptide bond formation. It has been suggested to have peptidyltransferase activity; this is somewhat controversial. Makes several contacts with the 16S rRNA in the 70S ribosome. In Enterobacter sp. (strain 638), this protein is Large ribosomal subunit protein uL2.